We begin with the raw amino-acid sequence, 1498 residues long: Transposon Ty3-I Gag-Pol polyprotein (1498 aa).

The segment at 265–282 adopts a CCHC-type zinc-finger fold; sequence RLCFYCKKEGHRLNECRA. Catalysis depends on Asp336, which acts as the For protease activity; shared with dimeric partner. The disordered stretch occupies residues 470 to 490; sequence TDPKSAGNRGNPRNTKLSLAP. Residues 646–823 enclose the Reverse transcriptase domain; the sequence is LDNKFIVPSK…EETEFLGYSI (178 aa). Residues Asp712, Asp774, and Asp775 each contribute to the Mg(2+) site. The RNase H Ty3/gyspy-type domain occupies 919-1037; the sequence is DASKDGIGAV…VADAISRAIY (119 aa). Residues 1132 to 1171 are integrase-type zinc finger-like; the sequence is HTLFGGHFGVTVTLAKISPIYYWPKLQHSIIQYIRTCVQC. Residues 1185 to 1350 enclose the Integrase catalytic domain; it reads LQPLPIAEGR…SPFEIDLGYL (166 aa). The Mg(2+) site is built by Asp1201 and Asp1262.

In terms of assembly, the protease is a homodimer, whose active site consists of two apposed aspartic acid residues. Post-translationally, initially, virus-like particles (VLPs) are composed of the structural unprocessed proteins Gag and Gag-Pol, and also contain the host initiator methionine tRNA (tRNA(i)-Met) which serves as a primer for minus-strand DNA synthesis, and a dimer of genomic Ty RNA. Processing of the polyproteins occurs within the particle and proceeds by an ordered pathway, called maturation. First, the protease (PR) is released by autocatalytic cleavage of the Gag-Pol polyprotein, and this cleavage is a prerequisite for subsequent processing at the remaining sites to release the mature structural and catalytic proteins. Maturation takes place prior to the RT reaction and is required to produce transposition-competent VLPs.

It is found in the cytoplasm. The protein localises to the nucleus. It catalyses the reaction DNA(n) + a 2'-deoxyribonucleoside 5'-triphosphate = DNA(n+1) + diphosphate. The catalysed reaction is Endonucleolytic cleavage to 5'-phosphomonoester.. Functionally, capsid protein (CA) is the structural component of the virus-like particle (VLP), forming the shell that encapsulates the genomic RNA-nucleocapsid complex. In terms of biological role, nucleocapsid protein p11 (NC) forms the nucleocore that coats the retro-elements dimeric RNA. Binds these RNAs through its zinc fingers. Promotes primer tRNA(i)-Met annealing to the multipartite primer-binding site (PBS), dimerization of Ty3 RNA and initiation of reverse transcription. The aspartyl protease (PR) mediates the proteolytic cleavages of the Gag and Gag-Pol polyproteins after assembly of the VLP. Its function is as follows. Reverse transcriptase/ribonuclease H (RT) is a multifunctional enzyme that catalyzes the conversion of the retro-elements RNA genome into dsDNA within the VLP. The enzyme displays a DNA polymerase activity that can copy either DNA or RNA templates, and a ribonuclease H (RNase H) activity that cleaves the RNA strand of RNA-DNA heteroduplexes during plus-strand synthesis and hydrolyzes RNA primers. The conversion leads to a linear dsDNA copy of the retrotransposon that includes long terminal repeats (LTRs) at both ends. Functionally, integrase (IN) targets the VLP to the nucleus, where a subparticle preintegration complex (PIC) containing at least integrase and the newly synthesized dsDNA copy of the retrotransposon must transit the nuclear membrane. Once in the nucleus, integrase performs the integration of the dsDNA into the host genome. The protein is Transposon Ty3-I Gag-Pol polyprotein (TY3B-I) of Saccharomyces cerevisiae (strain ATCC 204508 / S288c) (Baker's yeast).